Consider the following 293-residue polypeptide: Fructose-bisphosphate aldolase (293 aa).

D-glyceraldehyde 3-phosphate is bound at residue Ser-50. The Proton donor role is filled by Asp-85. 4 residues coordinate Zn(2+): His-86, Asp-106, Glu-136, and His-178. Gly-179 is a binding site for dihydroxyacetone phosphate. Position 208 (His-208) interacts with Zn(2+). Residues 209-211 and 230-233 contribute to the dihydroxyacetone phosphate site; these read GGS and NVNT.

The protein belongs to the class II fructose-bisphosphate aldolase family. Zn(2+) is required as a cofactor.

It carries out the reaction beta-D-fructose 1,6-bisphosphate = D-glyceraldehyde 3-phosphate + dihydroxyacetone phosphate. It participates in carbohydrate degradation; glycolysis; D-glyceraldehyde 3-phosphate and glycerone phosphate from D-glucose: step 4/4. Catalyzes the aldol condensation of dihydroxyacetone phosphate (DHAP or glycerone-phosphate) with glyceraldehyde 3-phosphate (G3P) to form fructose 1,6-bisphosphate (FBP) in gluconeogenesis and the reverse reaction in glycolysis. The sequence is that of Fructose-bisphosphate aldolase (fba) from Streptococcus pneumoniae serotype 4 (strain ATCC BAA-334 / TIGR4).